The sequence spans 473 residues: UDP-N-acetylmuramate--L-alanine ligase (473 aa).

112 to 118 is a binding site for ATP; it reads GTHGKTT.

It belongs to the MurCDEF family.

Its subcellular location is the cytoplasm. The enzyme catalyses UDP-N-acetyl-alpha-D-muramate + L-alanine + ATP = UDP-N-acetyl-alpha-D-muramoyl-L-alanine + ADP + phosphate + H(+). Its pathway is cell wall biogenesis; peptidoglycan biosynthesis. In terms of biological role, cell wall formation. The sequence is that of UDP-N-acetylmuramate--L-alanine ligase from Nitrosomonas eutropha (strain DSM 101675 / C91 / Nm57).